A 130-amino-acid chain; its full sequence is Small ribosomal subunit protein uS9 (130 aa).

The segment at 108–130 is disordered; the sequence is SREKERKKYGQRGARARFQYSKR.

The protein belongs to the universal ribosomal protein uS9 family.

The chain is Small ribosomal subunit protein uS9 from Solidesulfovibrio magneticus (strain ATCC 700980 / DSM 13731 / RS-1) (Desulfovibrio magneticus).